We begin with the raw amino-acid sequence, 636 residues long: Asparagine synthetase domain-containing protein 1 (636 aa).

Catalysis depends on C2, which acts as the Nucleophile. Residues 2–187 (CGICCVVALS…ASGIFKMDLR (186 aa)) enclose the Glutamine amidotransferase type-2 domain. One can recognise an Asparagine synthetase domain in the interval 291-607 (QFIDVLDEAV…GLEAASILPK (317 aa)).

The sequence is that of Asparagine synthetase domain-containing protein 1 (ASNSD1) from Gallus gallus (Chicken).